The primary structure comprises 404 residues: Cysteine desulfurase IscS (404 aa).

Pyridoxal 5'-phosphate is bound by residues 75-76 (AT), Asn155, Gln183, and 203-205 (SGH). Lys206 is subject to N6-(pyridoxal phosphate)lysine. Thr243 contributes to the pyridoxal 5'-phosphate binding site. Residue Cys328 is the Cysteine persulfide intermediate of the active site. Cys328 lines the [2Fe-2S] cluster pocket.

This sequence belongs to the class-V pyridoxal-phosphate-dependent aminotransferase family. NifS/IscS subfamily. Homodimer. Forms a heterotetramer with IscU, interacts with other sulfur acceptors. Pyridoxal 5'-phosphate serves as cofactor.

It is found in the cytoplasm. It carries out the reaction (sulfur carrier)-H + L-cysteine = (sulfur carrier)-SH + L-alanine. It participates in cofactor biosynthesis; iron-sulfur cluster biosynthesis. Functionally, master enzyme that delivers sulfur to a number of partners involved in Fe-S cluster assembly, tRNA modification or cofactor biosynthesis. Catalyzes the removal of elemental sulfur atoms from cysteine to produce alanine. Functions as a sulfur delivery protein for Fe-S cluster synthesis onto IscU, an Fe-S scaffold assembly protein, as well as other S acceptor proteins. The protein is Cysteine desulfurase IscS of Shewanella sp. (strain MR-4).